Consider the following 540-residue polypeptide: L-aspartate oxidase (540 aa).

Residues serine 16–alanine 19, lysine 38, serine 45–glycine 52, asparagine 161–alanine 162, and aspartate 223 each bind FAD. Succinate is bound by residues histidine 244 and threonine 259 to glutamate 260. Catalysis depends on arginine 290, which acts as the Proton donor/acceptor. An FAD-binding site is contributed by glutamate 375. A succinate-binding site is contributed by serine 389. FAD is bound at residue serine 391–leucine 392.

This sequence belongs to the FAD-dependent oxidoreductase 2 family. NadB subfamily. Monomer. Homodimer. Both the monomeric and dimeric forms of the enzyme are catalytically active. The cofactor is FAD.

The protein localises to the cytoplasm. The enzyme catalyses L-aspartate + O2 = iminosuccinate + H2O2. It catalyses the reaction fumarate + L-aspartate = iminosuccinate + succinate. The protein operates within cofactor biosynthesis; NAD(+) biosynthesis; iminoaspartate from L-aspartate (oxidase route): step 1/1. Its activity is regulated as follows. Inhibited by the product iminoaspartate. Competitively inhibited by mesotartrate. NAD acts as a competitive inhibitor to FAD. Inhibited by iodoacetic acid, diethylpyrocarbonate and tetranitromethane. In terms of biological role, catalyzes the oxidation of L-aspartate to iminoaspartate, the first step in the de novo biosynthesis of NAD(+). Can use either oxygen or fumarate as electron acceptors, which allows the enzyme to be functional under aerobic and anaerobic conditions. In vivo, fumarate is used under anaerobic conditions, and oxygen is the predominant electron acceptor under aerobic conditions due to the lower fumarate levels. In vitro, fumarate is a more efficient electron acceptor and is kinetically superior to oxygen. This Escherichia coli (strain K12) protein is L-aspartate oxidase.